The primary structure comprises 481 residues: Glycosyl hydrolase family 109 protein 1 (481 aa).

A signal peptide (tat-type signal) is located at residues 1–29 (MDNSSSRRRFLQTLGLATGALAAGSFANA). Residues 84–85 (ER), Asp106, 155–158 (WEWH), 175–176 (EV), and Asn204 each bind NAD(+). Residues Tyr233, Arg252, 264–267 (YPTH), and Tyr347 contribute to the substrate site. Tyr264 is an NAD(+) binding site.

This sequence belongs to the Gfo/Idh/MocA family. Glycosyl hydrolase 109 subfamily. NAD(+) serves as cofactor. In terms of processing, predicted to be exported by the Tat system. The position of the signal peptide cleavage has not been experimentally proven.

Glycosidase. In Akkermansia muciniphila (strain ATCC BAA-835 / DSM 22959 / JCM 33894 / BCRC 81048 / CCUG 64013 / CIP 107961 / Muc), this protein is Glycosyl hydrolase family 109 protein 1.